A 663-amino-acid polypeptide reads, in one-letter code: MTSQNWKNCFNKKAIEVIEIHRSQETITVETVNNEDKIKNNISKPKIKVHKKPIIKSISKLKLQPKFSRYNDIIDYSIDFNCNKNYFLKQDKVSGNTFIHVFCEKRESKINLESDIENLKCLGKETIEARNNNKEIALFSTLKNQCLGLKIMHELISRNVMFIDDNGKDELLVKCLEEGRVDMVKYLITVDINLISKLKRICQITQLSLETLQFVELINSEYEKIVEIGLKSAGREYIKLFFIQFILGNFSKESIIQTIDEYKLPPIPKEIEDFFFVYNYQMCDFVKLTEIKPRYLNEISKINIYPIGQVSIERRNELGRGGNGTVYSGVLKEIDSQGNEISIPVAIKIPTQFYKSKLVEVYKELAIHQKINGICGPKLFGCVKLNVGFGIIIERFDCSLHDYIQNNNIDFDLFFELALKMVITIRNLHKCHLNEIFHRDIKPHNWLVKKTKDELVVVLSDFGLSRENSETNENTLQKYRGTSVFIPPELNDNILYNEKSDIYSLGVSFMMLLYKVVYGKMENPFYEFKISKMEYFKTVVALENFLVPIVPTFLPDSFKEFLFSTMNRIYTCRPNSEECVERLITLKTEYENDKTKWQVNSAIIQKEKSLLTDSIISQQLKLMNQVKKFVQENDKFVFLKKTKLFFSESEIKQYLLSIIKCQE.

The 275-residue stretch at 312 to 586 (IERRNELGRG…EECVERLITL (275 aa)) folds into the Protein kinase domain. Residues 318–326 (LGRGGNGTV) and K348 each bind ATP. D440 acts as the Proton acceptor in catalysis.

Belongs to the protein kinase superfamily. Ser/Thr protein kinase family.

It carries out the reaction L-seryl-[protein] + ATP = O-phospho-L-seryl-[protein] + ADP + H(+). The enzyme catalyses L-threonyl-[protein] + ATP = O-phospho-L-threonyl-[protein] + ADP + H(+). This chain is Probable serine/threonine-protein kinase DDB_G0283301, found in Dictyostelium discoideum (Social amoeba).